The chain runs to 258 residues: MTRIDPKAVVDPSAELDEGVTVGPFTVIGPDVQVGAGTRVGPHVVINGPTRLGRNNRIHPFASIGDDPQDKKYAGEPTRLEIGDDNVIREYVTLNRGTPEAGGLTRLGDRNWIMAYSHVAHDCRLGNDITFANSASLAGHVDVEDHAILGGFALVHQFCRIGAYAFCGFGSVINRDVLPFTTVSGHMAQPHGINVVGLRRHGMGPERIRELKRAYRLIFKSGKRLDDALEELRLLGKENPDLEHLAAFIAASNRGILR.

It belongs to the transferase hexapeptide repeat family. LpxA subfamily. As to quaternary structure, homotrimer.

It is found in the cytoplasm. It carries out the reaction a (3R)-hydroxyacyl-[ACP] + UDP-N-acetyl-alpha-D-glucosamine = a UDP-3-O-[(3R)-3-hydroxyacyl]-N-acetyl-alpha-D-glucosamine + holo-[ACP]. It functions in the pathway glycolipid biosynthesis; lipid IV(A) biosynthesis; lipid IV(A) from (3R)-3-hydroxytetradecanoyl-[acyl-carrier-protein] and UDP-N-acetyl-alpha-D-glucosamine: step 1/6. Involved in the biosynthesis of lipid A, a phosphorylated glycolipid that anchors the lipopolysaccharide to the outer membrane of the cell. The polypeptide is Acyl-[acyl-carrier-protein]--UDP-N-acetylglucosamine O-acyltransferase (Alkalilimnicola ehrlichii (strain ATCC BAA-1101 / DSM 17681 / MLHE-1)).